Reading from the N-terminus, the 1269-residue chain is Myb-binding protein 1A-like protein (1269 aa).

Residues 708 to 783 (DPNKDEDESG…EEDEAMEEGQ (76 aa)) form a disordered region. Residues 721–730 (TDDKKRKLKE) are compositionally biased toward basic and acidic residues. Residues 731–783 (EDEDDDDEEEDDDNDEGDDDDDDDDEEEGGEEGEESSDSSDDEEEDEAMEEGQ) are compositionally biased toward acidic residues. Phosphoserine is present on S810. The segment at 1163–1269 (VKKVPEAEQT…KKKKKGADGE (107 aa)) is disordered. Over residues 1177 to 1195 (KKKKGFLPETKKRKNRKKP) the composition is skewed to basic residues. Basic and acidic residues predominate over residues 1199 to 1211 (EGKETETPVEKTP). Composition is skewed to basic residues over residues 1221-1232 (NKNKKKNKKRKQ) and 1256-1269 (KQKKKKKKKGADGE).

Belongs to the MYBBP1A family.

Its subcellular location is the nucleus. It is found in the nucleolus. May activate or repress transcription via interactions with sequence specific DNA-binding proteins. May play a role in the repression of the circadian clock gene expression. The sequence is that of Myb-binding protein 1A-like protein (mybbp1a) from Danio rerio (Zebrafish).